The chain runs to 228 residues: 3-dehydroquinate dehydratase (228 aa).

3-dehydroquinate is bound by residues Ser-26, 51–53, and Arg-84; that span reads EIR. His-127 serves as the catalytic Proton donor/acceptor. Catalysis depends on Lys-150, which acts as the Schiff-base intermediate with substrate. The 3-dehydroquinate site is built by Arg-190, Thr-209, and Gln-213.

This sequence belongs to the type-I 3-dehydroquinase family. As to quaternary structure, homodimer.

The enzyme catalyses 3-dehydroquinate = 3-dehydroshikimate + H2O. It functions in the pathway metabolic intermediate biosynthesis; chorismate biosynthesis; chorismate from D-erythrose 4-phosphate and phosphoenolpyruvate: step 3/7. Involved in the third step of the chorismate pathway, which leads to the biosynthesis of aromatic amino acids. Catalyzes the cis-dehydration of 3-dehydroquinate (DHQ) and introduces the first double bond of the aromatic ring to yield 3-dehydroshikimate. The protein is 3-dehydroquinate dehydratase of Thermoplasma acidophilum (strain ATCC 25905 / DSM 1728 / JCM 9062 / NBRC 15155 / AMRC-C165).